The sequence spans 587 residues: Protein IQ-DOMAIN 31 (587 aa).

The disordered stretch occupies residues 57 to 80 (ETNTVDRSGGMLETQNVGPEEISD). At serine 79 the chain carries Phosphoserine. 3 consecutive IQ domains span residues 112–140 (REIA…GIIR), 141–163 (LQAL…SVMG), and 164–188 (IVRL…VYRK). The segment at 149-159 (LVRRQAVATLF) is calmodulin-binding. A Nuclear localization signal motif is present at residues 176 to 183 (IRKSDIGV). Residues 344 to 587 (NPVVESSIQP…AKTTPAERKR (244 aa)) are disordered. Composition is skewed to basic and acidic residues over residues 357 to 373 (PRKE…KTRE) and 390 to 413 (CDEK…EMEV). Residues 424–434 (ALDSSLVNQID) show a composition bias toward polar residues. 2 stretches are compositionally biased toward basic and acidic residues: residues 435 to 472 (SNEK…ENQK) and 482 to 494 (KTER…HHET). Composition is skewed to polar residues over residues 495-506 (SPSIPSYMQATK) and 544-561 (RITS…SGDK).

Belongs to the IQD family. As to quaternary structure, binds to multiple calmodulin (CaM) in the presence of Ca(2+) and CaM-like proteins.

Its subcellular location is the nucleus. The protein localises to the nucleus envelope. The protein resides in the cytoplasm. It localises to the cytoskeleton. It is found in the cell membrane. Functionally, may be involved in cooperative interactions with calmodulins or calmodulin-like proteins. Recruits calmodulin proteins to microtubules, thus being a potential scaffold in cellular signaling and trafficking. May associate with nucleic acids and regulate gene expression at the transcriptional or post-transcriptional level. This chain is Protein IQ-DOMAIN 31, found in Arabidopsis thaliana (Mouse-ear cress).